Consider the following 518-residue polypeptide: MKMRTGKKGFLSILLAFLLVITSIPFTLVDVEAHHNGTNGTMMQYFEWYLPNDGNHWNRLNSDASNLKSKGITAVWIPPAWKGASQNDVGYGAYDLYDLGEFNQKGTVRTKYGTRSQLQAAVTSLKNNGIQVYGDVVMNHKGGADATEMVRAVEVNPNNRNQEVTGEYTIEAWTRFDFPGRGNTHSSFKWRWYHFDGVDWDQSRRLNNRIYKFRGHGKAWDWEVDTENGNYDYLMYADIDMDHPEVVNELRNWGVWYTNTLGLDGFRIDAVKHIKYSFTRDWINHVRSATGKNMFAVAEFWKNDLGAIENYLQKTNWNHSVFDVPLHYNLYNASKSGGNYDMRNIFNGTVVQRHPSHAVTFVDNHDSQPEEALESFVEEWFKPLAYALTLTREQGYPSVFYGDYYGIPTHGVPAMRSKIDPILEARQKYAYGKQNDYLDHHNIIGWTREGNTAHPNSGLATIMSDGAGGSKWMFVGRNKAGQVWSDITGNRTGTVTINADGWGNFSVNGGSVSIWVNK.

The N-terminal stretch at 1–33 (MKMRTGKKGFLSILLAFLLVITSIPFTLVDVEA) is a signal peptide. Positions 139, 196, 219, 221, 232, 238, 240, and 242 each coordinate Ca(2+). Residue D196 participates in Na(+) binding. Na(+) contacts are provided by D221, D232, and D238. Catalysis depends on D269, which acts as the Nucleophile. A Ca(2+)-binding site is contributed by H273. Catalysis depends on E299, which acts as the Proton donor.

This sequence belongs to the glycosyl hydrolase 13 family. Requires Ca(2+) as cofactor. The cofactor is Na(+).

It localises to the secreted. It catalyses the reaction Hydrolysis of (1-&gt;4)-alpha-D-glucosidic linkages in amylaceous polysaccharides, to remove successive maltohexaose residues from the non-reducing chain ends.. Its pathway is glycan degradation; starch degradation. This chain is Glucan 1,4-alpha-maltohexaosidase, found in Bacillus sp. (strain 707).